A 482-amino-acid polypeptide reads, in one-letter code: G2/mitotic-specific cyclin cdc13 (482 aa).

Polar residues-rich tracts occupy residues 35–55 (LHSS…STNV), 78–92 (SKNT…SVST), and 118–140 (SVFN…SVST). Residues 35–140 (LHSSENSLVN…LSTKSHSVST (106 aa)) form a disordered region. Residues 206–332 (DIFEYLNELE…ILRVLEFNLA (127 aa)) enclose the Cyclin N-terminal domain.

It belongs to the cyclin family. Cyclin AB subfamily. As to quaternary structure, interacts with cdc2. Interacts with rum1. Associates with microtubules. Also interacts with cdc11.

It is found in the nucleus. The protein localises to the cytoplasm. Its subcellular location is the cytoskeleton. It localises to the microtubule organizing center. The protein resides in the spindle pole body. Functionally, essential for the control of the cell cycle at the G2/M (mitosis) transition. Interacts with the cdc2 protein kinase to form MPF. G2/M cyclins accumulate steadily during G2 and are abruptly destroyed at mitosis. Involved in the reorganization of the cytoskeleton on transition from G2 to mitosis. Association with rum1 promotes its proteolysis during G1. Also essential for initiation of meiosis II. The sequence is that of G2/mitotic-specific cyclin cdc13 from Schizosaccharomyces pombe (strain 972 / ATCC 24843) (Fission yeast).